The chain runs to 368 residues: Histidinol-phosphate aminotransferase (368 aa).

An N6-(pyridoxal phosphate)lysine modification is found at Lys-228.

The protein belongs to the class-II pyridoxal-phosphate-dependent aminotransferase family. Histidinol-phosphate aminotransferase subfamily. It depends on pyridoxal 5'-phosphate as a cofactor.

It carries out the reaction L-histidinol phosphate + 2-oxoglutarate = 3-(imidazol-4-yl)-2-oxopropyl phosphate + L-glutamate. It functions in the pathway amino-acid biosynthesis; L-histidine biosynthesis; L-histidine from 5-phospho-alpha-D-ribose 1-diphosphate: step 7/9. The protein is Histidinol-phosphate aminotransferase of Methanosarcina mazei (strain ATCC BAA-159 / DSM 3647 / Goe1 / Go1 / JCM 11833 / OCM 88) (Methanosarcina frisia).